We begin with the raw amino-acid sequence, 75 residues long: DNA-directed RNA polymerase subunit omega (75 aa).

Belongs to the RNA polymerase subunit omega family. In cyanobacteria the RNAP catalytic core is composed of 2 alpha, 1 beta, 1 beta', 1 gamma and 1 omega subunit. When a sigma factor is associated with the core the holoenzyme is formed, which can initiate transcription.

It catalyses the reaction RNA(n) + a ribonucleoside 5'-triphosphate = RNA(n+1) + diphosphate. In terms of biological role, promotes RNA polymerase assembly. Latches the N- and C-terminal regions of the beta' subunit thereby facilitating its interaction with the beta and alpha subunits. The polypeptide is DNA-directed RNA polymerase subunit omega (Synechococcus sp. (strain CC9605)).